Here is a 203-residue protein sequence, read N- to C-terminus: UPF0637 protein SSP1683 (203 aa).

It belongs to the UPF0637 family.

In Staphylococcus saprophyticus subsp. saprophyticus (strain ATCC 15305 / DSM 20229 / NCIMB 8711 / NCTC 7292 / S-41), this protein is UPF0637 protein SSP1683.